The chain runs to 389 residues: Pregnancy-associated glycoprotein 1 (389 aa).

Positions 1-15 (MKWLVILGLVALSEC) are cleaved as a signal peptide. A Peptidase A1 domain is found at 76 to 386 (YVGNITIGTP…DRGQNRIGLR (311 aa)). A glycan (N-linked (GlcNAc...) asparagine) is linked at Asn79. Asp94 is a catalytic residue. Cys107 and Cys112 are joined by a disulfide. An N-linked (GlcNAc...) asparagine glycan is attached at Asn130. Residues Cys268 and Cys272 are joined by a disulfide bond. Residue Asp277 is part of the active site. Cysteines 311 and 345 form a disulfide. Residue Asn348 is glycosylated (N-linked (GlcNAc...) asparagine).

It belongs to the peptidase A1 family. As to expression, expressed throughout the chorion, with the signal localized exclusively over the trophectoderm.

The protein localises to the secreted. The protein resides in the extracellular space. Its function is as follows. Appears to be proteolytically inactive. The protein is Pregnancy-associated glycoprotein 1 of Sus scrofa (Pig).